The following is a 235-amino-acid chain: Carboxy-S-adenosyl-L-methionine synthase (235 aa).

S-adenosyl-L-methionine-binding positions include Y35, 60 to 62 (GCS), 83 to 84 (DN), N124, and R191.

Belongs to the class I-like SAM-binding methyltransferase superfamily. Cx-SAM synthase family. Homodimer.

It carries out the reaction prephenate + S-adenosyl-L-methionine = carboxy-S-adenosyl-L-methionine + 3-phenylpyruvate + H2O. Its function is as follows. Catalyzes the conversion of S-adenosyl-L-methionine (SAM) to carboxy-S-adenosyl-L-methionine (Cx-SAM). In Campylobacter jejuni subsp. doylei (strain ATCC BAA-1458 / RM4099 / 269.97), this protein is Carboxy-S-adenosyl-L-methionine synthase.